The primary structure comprises 397 residues: DNA-directed RNA polymerase subunit Rpo1C (397 aa).

The protein belongs to the RNA polymerase beta' chain family. As to quaternary structure, part of the RNA polymerase complex.

Its subcellular location is the cytoplasm. It catalyses the reaction RNA(n) + a ribonucleoside 5'-triphosphate = RNA(n+1) + diphosphate. In terms of biological role, DNA-dependent RNA polymerase (RNAP) catalyzes the transcription of DNA into RNA using the four ribonucleoside triphosphates as substrates. Forms part of the jaw domain. The polypeptide is DNA-directed RNA polymerase subunit Rpo1C (Pyrococcus abyssi (strain GE5 / Orsay)).